The following is a 538-amino-acid chain: Chaperonin GroEL (538 aa).

Residues 29–32, 86–90, Gly-413, 479–481, and Asp-495 contribute to the ATP site; these read TLGP, DGTTT, and DAL.

The protein belongs to the chaperonin (HSP60) family. As to quaternary structure, forms a cylinder of 14 subunits composed of two heptameric rings stacked back-to-back. Interacts with the co-chaperonin GroES.

The protein localises to the cytoplasm. It carries out the reaction ATP + H2O + a folded polypeptide = ADP + phosphate + an unfolded polypeptide.. Together with its co-chaperonin GroES, plays an essential role in assisting protein folding. The GroEL-GroES system forms a nano-cage that allows encapsulation of the non-native substrate proteins and provides a physical environment optimized to promote and accelerate protein folding. The sequence is that of Chaperonin GroEL from Thermotoga maritima (strain ATCC 43589 / DSM 3109 / JCM 10099 / NBRC 100826 / MSB8).